A 243-amino-acid chain; its full sequence is UDP-2,3-diacylglucosamine hydrolase (243 aa).

The Mn(2+) site is built by Asp8, His10, Asp41, Asn79, and His114. Substrate is bound at residue 79–80; sequence NR. Residues Asp122, Lys164, Lys167, and His195 each contribute to the substrate site. Residues His195 and His197 each contribute to the Mn(2+) site.

The protein belongs to the LpxH family. The cofactor is Mn(2+).

The protein resides in the cell inner membrane. The enzyme catalyses UDP-2-N,3-O-bis[(3R)-3-hydroxytetradecanoyl]-alpha-D-glucosamine + H2O = 2-N,3-O-bis[(3R)-3-hydroxytetradecanoyl]-alpha-D-glucosaminyl 1-phosphate + UMP + 2 H(+). The protein operates within glycolipid biosynthesis; lipid IV(A) biosynthesis; lipid IV(A) from (3R)-3-hydroxytetradecanoyl-[acyl-carrier-protein] and UDP-N-acetyl-alpha-D-glucosamine: step 4/6. Hydrolyzes the pyrophosphate bond of UDP-2,3-diacylglucosamine to yield 2,3-diacylglucosamine 1-phosphate (lipid X) and UMP by catalyzing the attack of water at the alpha-P atom. Involved in the biosynthesis of lipid A, a phosphorylated glycolipid that anchors the lipopolysaccharide to the outer membrane of the cell. The sequence is that of UDP-2,3-diacylglucosamine hydrolase from Vibrio vulnificus (strain YJ016).